The chain runs to 394 residues: Large ribosomal subunit protein mL44 (394 aa).

The N-terminal 21 residues, 1–21 (MFRHVAQNLGSRNTSIQSYRL), are a transit peptide targeting the mitochondrion.

Belongs to the ribonuclease III family. Mitochondrion-specific ribosomal protein mL44 subfamily. Component of the mitochondrial large ribosomal subunit (mt-LSU).

Its subcellular location is the mitochondrion. Its function is as follows. Component of the mitochondrial ribosome. May have a function in the assembly/stability of nascent mitochondrial polypeptides exiting the ribosome. The polypeptide is Large ribosomal subunit protein mL44 (Caenorhabditis elegans).